The primary structure comprises 310 residues: Ribose-phosphate pyrophosphokinase (310 aa).

ATP contacts are provided by residues 34–36 and 93–94; these read DQE and RQ. Positions 127 and 167 each coordinate Mg(2+). Lysine 190 is an active-site residue. Residues arginine 192, aspartate 216, and 220-224 contribute to the D-ribose 5-phosphate site; that span reads DSGGT.

It belongs to the ribose-phosphate pyrophosphokinase family. Class I subfamily. In terms of assembly, homohexamer. Mg(2+) serves as cofactor.

The protein resides in the cytoplasm. It catalyses the reaction D-ribose 5-phosphate + ATP = 5-phospho-alpha-D-ribose 1-diphosphate + AMP + H(+). It functions in the pathway metabolic intermediate biosynthesis; 5-phospho-alpha-D-ribose 1-diphosphate biosynthesis; 5-phospho-alpha-D-ribose 1-diphosphate from D-ribose 5-phosphate (route I): step 1/1. Involved in the biosynthesis of the central metabolite phospho-alpha-D-ribosyl-1-pyrophosphate (PRPP) via the transfer of pyrophosphoryl group from ATP to 1-hydroxyl of ribose-5-phosphate (Rib-5-P). The sequence is that of Ribose-phosphate pyrophosphokinase from Agrobacterium fabrum (strain C58 / ATCC 33970) (Agrobacterium tumefaciens (strain C58)).